A 275-amino-acid chain; its full sequence is Dermonecrotic toxin LarSicTox-alphaIII1 (275 aa).

H5 is an active-site residue. Mg(2+) is bound by residues E25 and D27. The Nucleophile role is filled by H41. Intrachain disulfides connect C45–C51 and C47–C190. D85 contributes to the Mg(2+) binding site. N252 carries N-linked (GlcNAc...) asparagine glycosylation.

The protein belongs to the arthropod phospholipase D family. Class II subfamily. The cofactor is Mg(2+). In terms of tissue distribution, expressed by the venom gland.

It is found in the secreted. The enzyme catalyses an N-(acyl)-sphingosylphosphocholine = an N-(acyl)-sphingosyl-1,3-cyclic phosphate + choline. It carries out the reaction an N-(acyl)-sphingosylphosphoethanolamine = an N-(acyl)-sphingosyl-1,3-cyclic phosphate + ethanolamine. The catalysed reaction is a 1-acyl-sn-glycero-3-phosphocholine = a 1-acyl-sn-glycero-2,3-cyclic phosphate + choline. It catalyses the reaction a 1-acyl-sn-glycero-3-phosphoethanolamine = a 1-acyl-sn-glycero-2,3-cyclic phosphate + ethanolamine. Its function is as follows. Dermonecrotic toxins cleave the phosphodiester linkage between the phosphate and headgroup of certain phospholipids (sphingolipid and lysolipid substrates), forming an alcohol (often choline) and a cyclic phosphate. This toxin acts on sphingomyelin (SM). It may also act on ceramide phosphoethanolamine (CPE), lysophosphatidylcholine (LPC) and lysophosphatidylethanolamine (LPE), but not on lysophosphatidylserine (LPS), and lysophosphatidylglycerol (LPG). It acts by transphosphatidylation, releasing exclusively cyclic phosphate products as second products. Induces dermonecrosis, hemolysis, increased vascular permeability, edema, inflammatory response, and platelet aggregation. The polypeptide is Dermonecrotic toxin LarSicTox-alphaIII1 (Loxosceles arizonica (Arizona brown spider)).